The sequence spans 29 residues: uncharacterized protein (29 aa).

This is an uncharacterized protein from Saccharomyces cerevisiae (strain ATCC 204508 / S288c) (Baker's yeast).